The sequence spans 67 residues: Conotoxin ArMLKM-01 (67 aa).

Positions Met-1–Thr-24 are cleaved as a signal peptide. Positions Asp-25–Val-51 are excised as a propeptide. Disulfide bonds link Cys-54-Cys-65, Cys-55-Cys-63, and Cys-58-Cys-66.

The protein belongs to the conotoxin M superfamily. As to expression, expressed by the venom duct.

It is found in the secreted. The protein is Conotoxin ArMLKM-01 of Conus arenatus (Sand-dusted cone).